Reading from the N-terminus, the 570-residue chain is Formate--tetrahydrofolate ligase (570 aa).

65 to 72 (TPYGEGKT) is an ATP binding site.

Belongs to the formate--tetrahydrofolate ligase family.

It carries out the reaction (6S)-5,6,7,8-tetrahydrofolate + formate + ATP = (6R)-10-formyltetrahydrofolate + ADP + phosphate. The protein operates within one-carbon metabolism; tetrahydrofolate interconversion. This chain is Formate--tetrahydrofolate ligase, found in Shewanella piezotolerans (strain WP3 / JCM 13877).